A 60-amino-acid chain; its full sequence is Single-pass membrane and coiled-coil domain-containing protein 4 homolog (60 aa).

A disordered region spans residues 1–22 (MRKLRGGQTRETRKQKQERREE). The span at 8–22 (QTRETRKQKQERREE) shows a compositional bias: basic and acidic residues. The stretch at 8-34 (QTRETRKQKQERREENQKIQQQLKTIV) forms a coiled coil. The helical transmembrane segment at 30–50 (LKTIVLPICGVVFLCIVAYVF) threads the bilayer.

Belongs to the SMCO4 family.

The protein resides in the membrane. In Culex quinquefasciatus (Southern house mosquito), this protein is Single-pass membrane and coiled-coil domain-containing protein 4 homolog.